The primary structure comprises 146 residues: Protein archease (146 aa).

The Ca(2+) site is built by D16, D145, and I146.

It belongs to the archease family.

Its function is as follows. Activates the tRNA-splicing ligase complex by facilitating the enzymatic turnover of catalytic subunit RtcB. Acts by promoting the guanylylation of RtcB, a key intermediate step in tRNA ligation. Can also alter the NTP specificity of RtcB such that ATP, dGTP or ITP is used efficiently. This is Protein archease from Methanosarcina barkeri (strain Fusaro / DSM 804).